The sequence spans 276 residues: Bis(5'-nucleosyl)-tetraphosphatase, symmetrical (276 aa).

The protein belongs to the Ap4A hydrolase family.

The enzyme catalyses P(1),P(4)-bis(5'-adenosyl) tetraphosphate + H2O = 2 ADP + 2 H(+). In terms of biological role, hydrolyzes diadenosine 5',5'''-P1,P4-tetraphosphate to yield ADP. The chain is Bis(5'-nucleosyl)-tetraphosphatase, symmetrical from Legionella pneumophila subsp. pneumophila (strain Philadelphia 1 / ATCC 33152 / DSM 7513).